An 837-amino-acid chain; its full sequence is Tuftelin-interacting protein 11 (837 aa).

2 stretches are compositionally biased toward basic and acidic residues: residues 1–13 (MSLSHLYRDGEGR) and 53–64 (VWAERDSDDERP). Disordered regions lie at residues 1–21 (MSLSHLYRDGEGRIDDDDDER), 53–72 (VWAERDSDDERPSFGGKRAR), and 85–133 (LKKG…KGFA). Residues 1-50 (MSLSHLYRDGEGRIDDDDDERENFEITDWDLQNEFNPNRQRHWQTKEEAT) are required for interaction with DHX15. Phosphoserine is present on residues serine 2, serine 59, and serine 98. A compositionally biased stretch (acidic residues) spans 91-102 (EEAELEDSDDEE). The segment covering 103–116 (KPVKQDDFPKDFGP) has biased composition (basic and acidic residues). At serine 144 the chain carries Phosphoserine. A G-patch domain is found at 149-195 (TKGIGQKLLQKMGYVPGRGLGKNAQGIINPIEAKQRKGKGAVGAYGS). The tract at residues 179-236 (IEAKQRKGKGAVGAYGSERTTQSMQDFPVVDSEEEAEEEFQKELSQWRKDPSGSKKKP) is disordered. The residue at position 210 (serine 210) is a Phosphoserine. Positions 217–231 (EFQKELSQWRKDPSG) are enriched in basic and acidic residues. A Nuclear localization signal motif is present at residues 700–705 (VKDKFN). Positions 710 to 734 (IMNRAVSSNVGAYMQPGARENIAYL) are required for nuclear speckle localization.

It belongs to the TFP11/STIP family. As to quaternary structure, identified in the spliceosome C complex. Found in the Intron Large (IL) complex, a post-mRNA release spliceosomal complex containing the excised intron, U2, U5 and U6 snRNPs, and splicing factors. Interacts with TUFT1. Interacts with DHX15; indicative for a recruitment of DHX15 to the IL complex. Interacts with GCFC2.

The protein localises to the cytoplasm. It localises to the nucleus. Functionally, involved in pre-mRNA splicing, specifically in spliceosome disassembly during late-stage splicing events. Intron turnover seems to proceed through reactions in two lariat-intron associated complexes termed Intron Large (IL) and Intron Small (IS). In cooperation with DHX15 seems to mediate the transition of the U2, U5 and U6 snRNP-containing IL complex to the snRNP-free IS complex leading to efficient debranching and turnover of excised introns. May play a role in the differentiation of ameloblasts and odontoblasts or in the forming of the enamel extracellular matrix. The sequence is that of Tuftelin-interacting protein 11 (TFIP11) from Pan troglodytes (Chimpanzee).